A 646-amino-acid polypeptide reads, in one-letter code: MSSPSMFDRISSPRQRLSNPLRSPPIREVSEYDLDELEPRSDDVLFDQEPPLPRLKKNMQHVSATSTRRSSSPASWDSKHRYSNSPPHTRSKPIFAGPPPPIASSMMMNQHPSRQSTVSSHGDNGRGYGLISASRFGSNSPSQKHVDNRPRLDSIWRSLQRREKALERDIQQLLDLQASGLIAGSGEGSESNFGSDTTTGESTFYSTATSKSRMMNSLHMPTRSTPDGNVIPVRQPVSNKPRGLKSTRVGLQRSMAALSDLKAEEDLHLSTALEQRKDALAYLDKMSKRRDDIYSELHALEDDEEEPLGQELRSLEAERQELDHDIQRLEEKLAGAKKRRRWVREKMEDVKGRREAGLSGYRAAGRDVDIEVRTLMQTPPIAPLDIDALGYGENTRPKENMDILRGTEFLQLRPERRTVEMARTWWQGEIAALERRKAQISQDRQALIEGSEVWSDVTGLVAQFEAKLRELVKSSQAGDADEEPQQAAMQSQLSEMDDVVQELQKRLQLAESKHWNLLICAIGAELEAFVEAKALLSDTLGLPEPAAAVDSPELSDSTDKAEGTSQEERADSHDESDNEVPADLLVSRMEDHDHDPPDSPQQQSVVLRRGSAGNNEVPVEFLADLHGPNKIEQDTEIAAVTRLMSK.

2 disordered regions span residues 1 to 148 (MSSP…HVDN) and 221 to 245 (PTRS…RGLK). A compositionally biased stretch (polar residues) spans 12 to 21 (SPRQRLSNPL). The span at 63–75 (SATSTRRSSSPAS) shows a compositional bias: low complexity. Polar residues predominate over residues 106–122 (MMMNQHPSRQSTVSSHG). Coiled-coil stretches lie at residues 283–350 (LDKM…MEDV) and 485–514 (QQAA…ESKH). Disordered regions lie at residues 475–494 (SQAG…SQLS) and 546–612 (AAAV…RGSA). Composition is skewed to basic and acidic residues over residues 557–575 (STDK…SHDE) and 588–597 (RMEDHDHDPP).

The protein belongs to the ATG28 family.

It is found in the cytoplasm. Its subcellular location is the vacuole membrane. The protein resides in the cytoplasmic vesicle membrane. Required for the autophagic degradation of peroxisomes called pexophagy, but not essential for general autophagy. Involved in resistance to elevated pH. The chain is Autophagy-related protein 28 from Gibberella zeae (strain ATCC MYA-4620 / CBS 123657 / FGSC 9075 / NRRL 31084 / PH-1) (Wheat head blight fungus).